A 209-amino-acid chain; its full sequence is Small ribosomal subunit protein uS3 (209 aa).

One can recognise a KH type-2 domain in the interval 38–107 (IRKVIKNKYA…RFIVNVEEIK (70 aa)).

This sequence belongs to the universal ribosomal protein uS3 family. In terms of assembly, part of the 30S ribosomal subunit. Forms a tight complex with proteins S10 and S14.

Functionally, binds the lower part of the 30S subunit head. Binds mRNA in the 70S ribosome, positioning it for translation. The chain is Small ribosomal subunit protein uS3 from Thermosipho africanus (strain TCF52B).